A 219-amino-acid polypeptide reads, in one-letter code: Ran-binding protein 1 homolog c (219 aa).

Basic and acidic residues predominate over residues 1 to 11; that stretch reads MASTEPERENR. 2 disordered regions span residues 1 to 30 and 160 to 219; these read MASTEPERENREDETEVNEDEDTGAQVAPI and QVGK…EAST. Residues 12–23 are compositionally biased toward acidic residues; sequence EDETEVNEDEDT. The 136-residue stretch at 26–161 folds into the RanBD1 domain; that stretch reads QVAPIVRLEE…FTEIAESQQV (136 aa). Over residues 185–219 the composition is skewed to basic and acidic residues; it reads SEEKAKEAEEKEPAKEDKETKKEKVEEEKKTEAST.

Its subcellular location is the nucleus. It localises to the nuclear pore complex. This chain is Ran-binding protein 1 homolog c (RANBP1C), found in Arabidopsis thaliana (Mouse-ear cress).